A 22-amino-acid polypeptide reads, in one-letter code: Superoxide dismutase [Cu-Zn] (22 aa).

The protein belongs to the Cu-Zn superoxide dismutase family. In terms of assembly, homodimer. Requires Cu cation as cofactor. The cofactor is Zn(2+).

Its subcellular location is the cytoplasm. The enzyme catalyses 2 superoxide + 2 H(+) = H2O2 + O2. Destroys radicals which are normally produced within the cells and which are toxic to biological systems. The polypeptide is Superoxide dismutase [Cu-Zn] (Hordeum vulgare (Barley)).